The chain runs to 837 residues: Protein translocase subunit SecA (837 aa).

ATP-binding positions include Q87, G105–T109, and D494. A disordered region spans residues H788–K837. The Zn(2+) site is built by C823, C825, C834, and C835.

It belongs to the SecA family. Monomer and homodimer. Part of the essential Sec protein translocation apparatus which comprises SecA, SecYEG and auxiliary proteins SecDF-YajC and YidC. Zn(2+) serves as cofactor.

The protein resides in the cell inner membrane. The protein localises to the cytoplasm. It catalyses the reaction ATP + H2O + cellular proteinSide 1 = ADP + phosphate + cellular proteinSide 2.. Its function is as follows. Part of the Sec protein translocase complex. Interacts with the SecYEG preprotein conducting channel. Has a central role in coupling the hydrolysis of ATP to the transfer of proteins into and across the cell membrane, serving as an ATP-driven molecular motor driving the stepwise translocation of polypeptide chains across the membrane. This is Protein translocase subunit SecA from Maridesulfovibrio salexigens (strain ATCC 14822 / DSM 2638 / NCIMB 8403 / VKM B-1763) (Desulfovibrio salexigens).